We begin with the raw amino-acid sequence, 261 residues long: Homeobox-leucine zipper protein HOX24 (261 aa).

2 disordered regions span residues Ala42–Arg67 and Lys160–Met188. The span at Gly46–Gly61 shows a compositional bias: gly residues. The homeobox DNA-binding region spans Gly61–Gln121. Residues Lys120–Arg164 are leucine-zipper.

Belongs to the HD-ZIP homeobox family. Class I subfamily. Expressed in roots and panicles.

Its subcellular location is the nucleus. Probable transcription factor. The polypeptide is Homeobox-leucine zipper protein HOX24 (HOX24) (Oryza sativa subsp. japonica (Rice)).